A 466-amino-acid chain; its full sequence is Asparagine--tRNA ligase (466 aa).

It belongs to the class-II aminoacyl-tRNA synthetase family. In terms of assembly, homodimer.

It is found in the cytoplasm. It catalyses the reaction tRNA(Asn) + L-asparagine + ATP = L-asparaginyl-tRNA(Asn) + AMP + diphosphate + H(+). This is Asparagine--tRNA ligase from Salmonella typhimurium (strain LT2 / SGSC1412 / ATCC 700720).